A 226-amino-acid chain; its full sequence is Probable thiol methyltransferase 2 (226 aa).

Residues Trp-29, Trp-33, Trp-40, and Gly-67 each contribute to the S-adenosyl-L-methionine site. Position 79 is a phosphoserine (Ser-79). Residues Asp-88, 116–117 (DF), and Tyr-132 each bind S-adenosyl-L-methionine.

This sequence belongs to the class I-like SAM-binding methyltransferase superfamily. TPMT family.

It catalyses the reaction a thiol + S-adenosyl-L-methionine = a methyl thioether + S-adenosyl-L-homocysteine + H(+). Its function is as follows. S-adenosyl-L-methionine-dependent methyltransferase. The chain is Probable thiol methyltransferase 2 (HOL3) from Arabidopsis thaliana (Mouse-ear cress).